The primary structure comprises 399 residues: Cell division protein FtsZ (399 aa).

GTP-binding positions include 18-22 (GGGVN), 105-107 (GTG), Glu-136, Arg-140, and Asp-184. Positions 311–399 (GFDGGQPPSK…EELDVPDFLK (89 aa)) are disordered. The span at 388 to 399 (AAEELDVPDFLK) shows a compositional bias: acidic residues.

It belongs to the FtsZ family. As to quaternary structure, homodimer. Polymerizes to form a dynamic ring structure in a strictly GTP-dependent manner. Interacts directly with several other division proteins.

Its subcellular location is the cytoplasm. Functionally, essential cell division protein that forms a contractile ring structure (Z ring) at the future cell division site. The regulation of the ring assembly controls the timing and the location of cell division. One of the functions of the FtsZ ring is to recruit other cell division proteins to the septum to produce a new cell wall between the dividing cells. Binds GTP and shows GTPase activity. This is Cell division protein FtsZ from Streptomyces coelicolor (strain ATCC BAA-471 / A3(2) / M145).